The following is a 629-amino-acid chain: Sushi domain-containing protein 5 (629 aa).

The first 35 residues, 1–35, serve as a signal peptide directing secretion; the sequence is MTAEGPSPPARWHRRLPGLWAAALLLLGLPRLSVR. The Extracellular segment spans residues 36–574; that stretch reads ADGKFFVLES…DGCPGLSRGP (539 aa). One can recognise a Link domain in the interval 39-134; it reads KFFVLESQNG…GGTYSALCIK (96 aa). Cystine bridges form between Cys-61/Cys-132, Cys-140/Cys-184, and Cys-167/Cys-197. The region spanning 138 to 199 is the Sushi domain; sequence KPCGDPPSFP…WYGLVQACGK (62 aa). Residues 225–249 show a composition bias toward basic and acidic residues; sequence EDSRTEADEDRGQGDSSEEAPKQDR. Disordered stretches follow at residues 225-252 and 344-403; these read EDSR…RLVS and DGPS…GLDE. Residues 575–595 traverse the membrane as a helical segment; sequence VIATIVTVLCLLLLLAGVGMV. Over 596-629 the chain is Cytoplasmic; the sequence is WGYRKCQHKSSVYKLNVGQRQARHYHQQIEMEKV.

It is found in the membrane. The polypeptide is Sushi domain-containing protein 5 (SUSD5) (Homo sapiens (Human)).